The chain runs to 601 residues: NADH-quinone oxidoreductase subunit C/D (601 aa).

The tract at residues 1 to 191 (MKLTREFPSN…DPFMLDAVKQ (191 aa)) is NADH dehydrogenase I subunit C. Residues 215-601 (DYMFLNLGPN…IDFVMSDVDR (387 aa)) are NADH dehydrogenase I subunit D.

It in the N-terminal section; belongs to the complex I 30 kDa subunit family. This sequence in the C-terminal section; belongs to the complex I 49 kDa subunit family. As to quaternary structure, NDH-1 is composed of 13 different subunits. Subunits NuoB, CD, E, F, and G constitute the peripheral sector of the complex.

Its subcellular location is the cell inner membrane. It carries out the reaction a quinone + NADH + 5 H(+)(in) = a quinol + NAD(+) + 4 H(+)(out). Its function is as follows. NDH-1 shuttles electrons from NADH, via FMN and iron-sulfur (Fe-S) centers, to quinones in the respiratory chain. The immediate electron acceptor for the enzyme in this species is believed to be ubiquinone. Couples the redox reaction to proton translocation (for every two electrons transferred, four hydrogen ions are translocated across the cytoplasmic membrane), and thus conserves the redox energy in a proton gradient. This Aeromonas hydrophila subsp. hydrophila (strain ATCC 7966 / DSM 30187 / BCRC 13018 / CCUG 14551 / JCM 1027 / KCTC 2358 / NCIMB 9240 / NCTC 8049) protein is NADH-quinone oxidoreductase subunit C/D.